The sequence spans 489 residues: Ent-kaurenoic acid oxidase 2 (489 aa).

Residues 5–25 (GLILMWFPLIILGLFVLKWVL) form a helical membrane-spanning segment. C436 provides a ligand contact to heme.

It belongs to the cytochrome P450 family. It depends on heme as a cofactor. As to expression, widely expressed. Highly expressed in influorescence stem, influorescence, and silique tissue. Weakly expressed in cauline and rosette leaves. Expressed at a weaker level in stem and influorescence than AtKAO1/CYP88A3.

It is found in the endoplasmic reticulum membrane. The catalysed reaction is ent-kaur-16-en-19-oate + 3 reduced [NADPH--hemoprotein reductase] + 3 O2 = gibberellin A12 + 3 oxidized [NADPH--hemoprotein reductase] + 4 H2O + 4 H(+). It catalyses the reaction ent-kaur-16-en-19-oate + reduced [NADPH--hemoprotein reductase] + O2 = ent-7alpha-hydroxykaur-16-en-19-oate + oxidized [NADPH--hemoprotein reductase] + H2O + H(+). It carries out the reaction ent-7alpha-hydroxykaur-16-en-19-oate + reduced [NADPH--hemoprotein reductase] + O2 = gibberellin A12 aldehyde + oxidized [NADPH--hemoprotein reductase] + 2 H2O + H(+). The enzyme catalyses gibberellin A12 aldehyde + reduced [NADPH--hemoprotein reductase] + O2 = gibberellin A12 + oxidized [NADPH--hemoprotein reductase] + H2O + 2 H(+). It participates in plant hormone biosynthesis; gibberellin biosynthesis. Functionally, catalyzes three successive oxidations of ent-kaurenoic acid giving gibberellin 12 (GA12), a key step in gibberellins (GAs) biosynthesis. GAs, which are involved many processes, including stem elongation, play a central role in plant development. In Arabidopsis thaliana (Mouse-ear cress), this protein is Ent-kaurenoic acid oxidase 2.